Here is a 184-residue protein sequence, read N- to C-terminus: Muscle-specific protein 20 (184 aa).

The region spanning 17–122 (PEMDKEAQEW…NTIFALGRAT (106 aa)) is the Calponin-homology (CH) domain. Residues 157 to 181 (VGLQAGSNKGATQAGQNLGAGRKIL) form a Calponin-like repeat.

This sequence belongs to the calponin family. Found in synchronous muscle; not found in asynchronous indirect flight muscle.

This is Muscle-specific protein 20 (Mp20) from Drosophila melanogaster (Fruit fly).